Here is a 517-residue protein sequence, read N- to C-terminus: GMP synthase [glutamine-hydrolyzing] (517 aa).

One can recognise a Glutamine amidotransferase type-1 domain in the interval 4–193 (KIIILDFGSQ…VVDICGGKQD (190 aa)). C79 acts as the Nucleophile in catalysis. Residues H167 and E169 contribute to the active site. The GMPS ATP-PPase domain maps to 194–382 (WSAASFIETT…LGMPEHLITR (189 aa)). 221-227 (SGGVDSS) is an ATP binding site.

In terms of assembly, homodimer.

It carries out the reaction XMP + L-glutamine + ATP + H2O = GMP + L-glutamate + AMP + diphosphate + 2 H(+). Its pathway is purine metabolism; GMP biosynthesis; GMP from XMP (L-Gln route): step 1/1. Functionally, catalyzes the synthesis of GMP from XMP. The protein is GMP synthase [glutamine-hydrolyzing] of Phocaeicola vulgatus (strain ATCC 8482 / DSM 1447 / JCM 5826 / CCUG 4940 / NBRC 14291 / NCTC 11154) (Bacteroides vulgatus).